Consider the following 499-residue polypeptide: Glycerol kinase (499 aa).

T13 contacts ADP. ATP-binding residues include T13, T14, and S15. Sn-glycerol 3-phosphate is bound at residue T13. R17 contacts ADP. Sn-glycerol 3-phosphate is bound by residues R83, E84, Y135, and D244. Positions 83, 84, 135, 244, and 245 each coordinate glycerol. Residues T266 and G309 each contribute to the ADP site. ATP-binding residues include T266, G309, Q313, and G410. Residues G410 and N414 each coordinate ADP.

Belongs to the FGGY kinase family.

The enzyme catalyses glycerol + ATP = sn-glycerol 3-phosphate + ADP + H(+). The protein operates within polyol metabolism; glycerol degradation via glycerol kinase pathway; sn-glycerol 3-phosphate from glycerol: step 1/1. Its activity is regulated as follows. Inhibited by fructose 1,6-bisphosphate (FBP). In terms of biological role, key enzyme in the regulation of glycerol uptake and metabolism. Catalyzes the phosphorylation of glycerol to yield sn-glycerol 3-phosphate. In Paraburkholderia phymatum (strain DSM 17167 / CIP 108236 / LMG 21445 / STM815) (Burkholderia phymatum), this protein is Glycerol kinase.